The sequence spans 516 residues: GMP synthase [glutamine-hydrolyzing] (516 aa).

The 194-residue stretch at 6–199 folds into the Glutamine amidotransferase type-1 domain; the sequence is KVLILDFGSQ…LFEIAGLTSG (194 aa). The active-site Nucleophile is C83. Active-site residues include H173 and E175. Residues 200–391 form the GMPS ATP-PPase domain; it reads WTMSSFLETE…LGMPDFIIWR (192 aa). ATP is bound at residue 227–233; the sequence is SGGVDST.

As to quaternary structure, homodimer.

The catalysed reaction is XMP + L-glutamine + ATP + H2O = GMP + L-glutamate + AMP + diphosphate + 2 H(+). The protein operates within purine metabolism; GMP biosynthesis; GMP from XMP (L-Gln route): step 1/1. Its function is as follows. Catalyzes the synthesis of GMP from XMP. This chain is GMP synthase [glutamine-hydrolyzing], found in Solidesulfovibrio magneticus (strain ATCC 700980 / DSM 13731 / RS-1) (Desulfovibrio magneticus).